The primary structure comprises 313 residues: ADP-L-glycero-D-manno-heptose-6-epimerase (313 aa).

NADP(+)-binding positions include 10-11 (MI), 31-32 (DN), K38, R53, 75-79 (EGACS), and N92. Y139 (proton acceptor) is an active-site residue. K143 is an NADP(+) binding site. A substrate-binding site is contributed by N174. NADP(+)-binding residues include V175 and K183. K183 serves as the catalytic Proton acceptor. Residues S185, H192, 206 to 209 (FAGS), R214, and Y277 each bind substrate.

Belongs to the NAD(P)-dependent epimerase/dehydratase family. HldD subfamily. In terms of assembly, homopentamer. It depends on NADP(+) as a cofactor.

It catalyses the reaction ADP-D-glycero-beta-D-manno-heptose = ADP-L-glycero-beta-D-manno-heptose. It participates in nucleotide-sugar biosynthesis; ADP-L-glycero-beta-D-manno-heptose biosynthesis; ADP-L-glycero-beta-D-manno-heptose from D-glycero-beta-D-manno-heptose 7-phosphate: step 4/4. In terms of biological role, catalyzes the interconversion between ADP-D-glycero-beta-D-manno-heptose and ADP-L-glycero-beta-D-manno-heptose via an epimerization at carbon 6 of the heptose. The protein is ADP-L-glycero-D-manno-heptose-6-epimerase of Vibrio campbellii (strain ATCC BAA-1116).